Consider the following 302-residue polypeptide: S-adenosylmethionine sensor upstream of mTORC1 (302 aa).

S-adenosyl-L-homocysteine-binding residues include R73, G132, and D150. Positions 73, 132, 150, 151, 162, 163, and 196 each coordinate S-adenosyl-L-methionine. Residues D162, F163, and S196 each contribute to the S-adenosyl-L-homocysteine site.

The protein belongs to the BMT2/SAMTOR family.

Its function is as follows. S-adenosyl-L-methionine-binding protein. It is unclear whether this protein acts as a sensor of S-adenosyl-L-methionine to signal methionine sufficiency to mTORC1. Probably acts as a S-adenosyl-L-methionine-dependent methyltransferase. This chain is S-adenosylmethionine sensor upstream of mTORC1, found in Drosophila melanogaster (Fruit fly).